We begin with the raw amino-acid sequence, 254 residues long: 7-cyano-7-deazaguanine synthase (254 aa).

30–40 (YSGGQDSATCL) provides a ligand contact to ATP. Positions 218, 233, 236, and 239 each coordinate Zn(2+).

It belongs to the QueC family. Zn(2+) is required as a cofactor.

It catalyses the reaction 7-carboxy-7-deazaguanine + NH4(+) + ATP = 7-cyano-7-deazaguanine + ADP + phosphate + H2O + H(+). It participates in purine metabolism; 7-cyano-7-deazaguanine biosynthesis. In terms of biological role, catalyzes the ATP-dependent conversion of 7-carboxy-7-deazaguanine (CDG) to 7-cyano-7-deazaguanine (preQ(0)). In Zymomonas mobilis subsp. mobilis (strain ATCC 31821 / ZM4 / CP4), this protein is 7-cyano-7-deazaguanine synthase.